Here is a 249-residue protein sequence, read N- to C-terminus: Adapter protein MecA (249 aa).

Belongs to the MecA family. As to quaternary structure, homodimer.

Enables the recognition and targeting of unfolded and aggregated proteins to the ClpC protease or to other proteins involved in proteolysis. The protein is Adapter protein MecA of Streptococcus thermophilus (strain ATCC BAA-250 / LMG 18311).